The primary structure comprises 602 residues: PEX5-related protein (602 aa).

Disordered stretches follow at residues valine 94–serine 140 and histidine 167–glutamate 206. Phosphoserine is present on residues serine 181, serine 229, serine 233, and serine 237. TPR repeat units follow at residues tryptophan 302–asparagine 335, alanine 336–asparagine 369, and lysine 371–tyrosine 403. Serine 421 and serine 423 each carry phosphoserine. TPR repeat units lie at residues proline 450–aspartate 483, serine 485–phenylalanine 517, and arginine 519–serine 551.

The protein belongs to the peroxisomal targeting signal receptor family. Forms an obligate 4:4 complex with HCN2. Interacts with RAB8B. Interacts with HCN3. Interacts with HCN4 with a 4:4 HCN4:PEX5L stoichiometry; reduces the effects of cAMP on the voltage-dependence and rate of activation of HCN4. In terms of tissue distribution, brain specific.

It is found in the cytoplasm. The protein resides in the membrane. Functionally, accessory subunit of hyperpolarization-activated cyclic nucleotide-gated (HCN) channels, regulating their cell-surface expression and cyclic nucleotide dependence. This is PEX5-related protein (Pex5l) from Rattus norvegicus (Rat).